A 242-amino-acid chain; its full sequence is Anamorsin homolog (242 aa).

The interval 1 to 140 (MMNFADTLVI…NVTAENPDFL (140 aa)) is N-terminal SAM-like domain. The tract at residues 140-159 (LSNEDDNDEHSSDGEAHENA) is disordered. The segment at 141–162 (SNEDDNDEHSSDGEAHENAEDN) is linker. Over residues 148–159 (EHSSDGEAHENA) the composition is skewed to basic and acidic residues. C205, C208, C216, and C219 together coordinate [4Fe-4S] cluster. Short sequence motifs (cx2C motif) lie at residues 205–208 (CGNC) and 216–219 (CASC). The segment at 205–219 (CGNCYLGDAFRCASC) is fe-S binding site B.

It belongs to the anamorsin family. In terms of assembly, monomer. The cofactor is [4Fe-4S] cluster.

It localises to the cytoplasm. Its subcellular location is the mitochondrion intermembrane space. Component of the cytosolic iron-sulfur (Fe-S) protein assembly (CIA) machinery. Required for the maturation of extramitochondrial Fe-S proteins. Part of an electron transfer chain functioning in an early step of cytosolic Fe-S biogenesis, facilitating the de novo assembly of a [4Fe-4S] cluster on the cytosolic Fe-S scaffold complex. Electrons are transferred from NADPH via a FAD- and FMN-containing diflavin oxidoreductase. Together with the diflavin oxidoreductase, also required for the assembly of the diferric tyrosyl radical cofactor of ribonucleotide reductase (RNR), probably by providing electrons for reduction during radical cofactor maturation in the catalytic small subunit. The protein is Anamorsin homolog of Plasmodium vivax (strain Salvador I).